Consider the following 377-residue polypeptide: Flap endonuclease 1 (377 aa).

Residues Met-1–Arg-104 form an N-domain region. Mg(2+) is bound at residue Asp-34. Arg-47 and Arg-70 together coordinate DNA. 5 residues coordinate Mg(2+): Asp-86, Glu-158, Glu-160, Asp-179, and Asp-181. The tract at residues Asn-122–His-253 is I-domain. Glu-158 lines the DNA pocket. The DNA site is built by Gly-231 and Asp-233. Asp-233 lines the Mg(2+) pocket. The interval Thr-336–Phe-344 is interaction with PCNA. Residues Gln-337 to Lys-377 form a disordered region. The segment covering Gln-363 to Lys-377 has biased composition (basic residues).

The protein belongs to the XPG/RAD2 endonuclease family. FEN1 subfamily. As to quaternary structure, interacts with PCNA. Three molecules of FEN1 bind to one PCNA trimer with each molecule binding to one PCNA monomer. PCNA stimulates the nuclease activity without altering cleavage specificity. Mg(2+) is required as a cofactor. Post-translationally, phosphorylated. Phosphorylation upon DNA damage induces relocalization to the nuclear plasma.

It localises to the nucleus. It is found in the nucleolus. The protein resides in the nucleoplasm. The protein localises to the mitochondrion. In terms of biological role, structure-specific nuclease with 5'-flap endonuclease and 5'-3' exonuclease activities involved in DNA replication and repair. During DNA replication, cleaves the 5'-overhanging flap structure that is generated by displacement synthesis when DNA polymerase encounters the 5'-end of a downstream Okazaki fragment. It enters the flap from the 5'-end and then tracks to cleave the flap base, leaving a nick for ligation. Also involved in the long patch base excision repair (LP-BER) pathway, by cleaving within the apurinic/apyrimidinic (AP) site-terminated flap. Acts as a genome stabilization factor that prevents flaps from equilibrating into structures that lead to duplications and deletions. Also possesses 5'-3' exonuclease activity on nicked or gapped double-stranded DNA, and exhibits RNase H activity. Also involved in replication and repair of rDNA and in repairing mitochondrial DNA. The polypeptide is Flap endonuclease 1 (Nematostella vectensis (Starlet sea anemone)).